Reading from the N-terminus, the 84-residue chain is ATPase-stabilizing factor 15 kDa protein (84 aa).

The segment covering 1–18 (MTRTNKWTEREGKADPKY) has biased composition (basic and acidic residues). The interval 1 to 84 (MTRTNKWTER…EQKFENVQKE (84 aa)) is disordered. Phosphoserine is present on residues Ser-28 and Ser-69. Residues 74-84 (HEQKFENVQKE) are compositionally biased toward basic and acidic residues.

Belongs to the STF2 family.

It is found in the mitochondrion. The protein resides in the cytoplasm. Found to stabilize, together with STF1, a complex of intrinsic ATPase inhibitor INH1 and proton-translocating ATPase (F(1)F(0)-ATPase) in mitochondrial membranes. Binds to the F0 part and may function to hold the ATPase inhibitor or STF1 on the F1 subunit. Also acts as a hydrophilins that enhances dry stress tolerance. Cell viability after desiccation and rehydration is due to the antioxidant capacity of the protein, which reduces the number of apoptotic cells during stress conditions by minimising the accumulation of reactive oxygen species (ROS) in the cells. In Saccharomyces cerevisiae (strain ATCC 204508 / S288c) (Baker's yeast), this protein is ATPase-stabilizing factor 15 kDa protein (STF2).